The primary structure comprises 494 residues: Alpha-amylase-related protein (494 aa).

Residues 1–20 form the signal peptide; sequence MFKFATAVILCLVAASSTLA. Pyrrolidone carboxylic acid is present on Gln21. A disulfide bond links Cys48 and Cys104. 3 residues coordinate Ca(2+): Asn118, Gln169, and Asp178. Residues Cys157 and Cys171 are joined by a disulfide bond. Arg206 is a binding site for chloride. The active-site Nucleophile is the Asp208. His212 contributes to the Ca(2+) binding site. Glu245 serves as the catalytic Proton donor. Positions 308 and 343 each coordinate chloride. 3 disulfide bridges follow: Cys376-Cys382, Cys418-Cys441, and Cys448-Cys460.

It belongs to the glycosyl hydrolase 13 family. Monomer. The cofactor is Ca(2+). Chloride serves as cofactor.

It is found in the secreted. It carries out the reaction Endohydrolysis of (1-&gt;4)-alpha-D-glucosidic linkages in polysaccharides containing three or more (1-&gt;4)-alpha-linked D-glucose units.. This is Alpha-amylase-related protein (Amyrel) from Drosophila bipectinata (Fruit fly).